The following is a 362-amino-acid chain: Formyltransferase/hydrolase complex Fhc subunit B (362 aa).

As to quaternary structure, octaheteromer. Part of the formyltransferase/hydrolase complex fhc; composed of FhcA, FhcB, FhcC and FhcD.

The protein localises to the cytoplasm. It functions in the pathway one-carbon metabolism; formaldehyde degradation; formate from formaldehyde (H(4)MPT route): step 4/5. Its function is as follows. Involved in the transformation of 5-formyl tetrahydromethanopterin (5-formyl-H(4)MPT) to methanofuran (MFR) and formate via the formylmethanofuran (formyl-MFR). The polypeptide is Formyltransferase/hydrolase complex Fhc subunit B (fhcB) (Methylorubrum extorquens (strain ATCC 14718 / DSM 1338 / JCM 2805 / NCIMB 9133 / AM1) (Methylobacterium extorquens)).